The sequence spans 243 residues: Probable septum site-determining protein MinC (243 aa).

Belongs to the MinC family. In terms of assembly, interacts with MinD and FtsZ.

Its function is as follows. Cell division inhibitor that blocks the formation of polar Z ring septums. Rapidly oscillates between the poles of the cell to destabilize FtsZ filaments that have formed before they mature into polar Z rings. Prevents FtsZ polymerization. The sequence is that of Probable septum site-determining protein MinC from Agathobacter rectalis (strain ATCC 33656 / DSM 3377 / JCM 17463 / KCTC 5835 / VPI 0990) (Eubacterium rectale).